The chain runs to 249 residues: Glucosamine-6-phosphate deaminase (249 aa).

Asp67 serves as the catalytic Proton acceptor; for enolization step. Catalysis depends on Asn136, which acts as the For ring-opening step. His138 serves as the catalytic Proton acceptor; for ring-opening step. Catalysis depends on Glu143, which acts as the For ring-opening step.

It belongs to the glucosamine/galactosamine-6-phosphate isomerase family. NagB subfamily.

It catalyses the reaction alpha-D-glucosamine 6-phosphate + H2O = beta-D-fructose 6-phosphate + NH4(+). It participates in amino-sugar metabolism; N-acetylneuraminate degradation; D-fructose 6-phosphate from N-acetylneuraminate: step 5/5. Catalyzes the reversible isomerization-deamination of glucosamine 6-phosphate (GlcN6P) to form fructose 6-phosphate (Fru6P) and ammonium ion. The sequence is that of Glucosamine-6-phosphate deaminase from Clostridium botulinum (strain Alaska E43 / Type E3).